A 377-amino-acid polypeptide reads, in one-letter code: RING finger protein 215 (377 aa).

Residues 1–22 (MGPAARPALRSPPPPPPPPPSP) are Cytoplasmic-facing. Residues 1-22 (MGPAARPALRSPPPPPPPPPSP) are disordered. Positions 10–22 (RSPPPPPPPPPSP) are enriched in pro residues. A helical membrane pass occupies residues 23–43 (LLLLLPLLPLWLGLAGPGAAA). Residues 44–250 (DGSEPAAGAG…GGSRAQEQKP (207 aa)) are Extracellular-facing. An N-linked (GlcNAc...) asparagine glycan is attached at N186. Residues 251–271 (LQQLWNAILLVAMLLCTGLVV) traverse the membrane as a helical segment. Residues 272 to 377 (QAQRQASRQS…NVLGNRYSDD (106 aa)) are Cytoplasmic-facing. An RING-type; atypical zinc finger spans residues 325–366 (CAVCLDYFCNKQWLRVLPCKHEFHRDCVDPWLMLQQTCPLCK).

The protein localises to the membrane. The chain is RING finger protein 215 (RNF215) from Homo sapiens (Human).